Reading from the N-terminus, the 104-residue chain is UPF0212 protein PH1312 (104 aa).

This sequence belongs to the UPF0212 family.

In Pyrococcus horikoshii (strain ATCC 700860 / DSM 12428 / JCM 9974 / NBRC 100139 / OT-3), this protein is UPF0212 protein PH1312.